We begin with the raw amino-acid sequence, 273 residues long: MQKALETKRLTLSYGETIIIDELNLEIPKGEITIFIGSNGCGKSTLLRSLARLLKPTTGDILLDNQAIQSMQTKQIARQMAILPQGPQAPEGLTVLQLVKQGRYPYQTWLKQWSEKDEEMVQNALAATGMTEFAERDVHALSGGQRQRAWIAMTLAQDTDIILLDEPTTYLDMTHQIEVLDLLFELNETEQRTIVMVLHDLNLACRYADNIVAIQDKQIYAQGKPEEVVDEKLVRDVFRMECQISTDPLFGTPLCIPHGKGRRVRKEVAHAMR.

One can recognise an ABC transporter domain in the interval 5–241 (LETKRLTLSY…KLVRDVFRME (237 aa)). 37-44 (GSNGCGKS) is an ATP binding site.

Belongs to the ABC transporter superfamily. In terms of assembly, the complex is composed of two ATP-binding proteins (FpuD), two transmembrane proteins (FpuB) and a solute-binding protein (FpuA).

The protein resides in the cell membrane. The catalysed reaction is a Fe(III)-siderophore(out) + ATP + H2O = a Fe(III)-siderophore(in) + ADP + phosphate + H(+). Part of an ABC transporter complex involved in ferric-petrobactin uptake. Probably responsible for energy coupling to the transport system. This is Petrobactin import ATP-binding protein FpuD from Bacillus anthracis.